A 360-amino-acid chain; its full sequence is DNA replication and repair protein RecF (360 aa).

Position 30–37 (30–37) interacts with ATP; the sequence is GQNGSGKT.

The protein belongs to the RecF family.

The protein resides in the cytoplasm. Functionally, the RecF protein is involved in DNA metabolism; it is required for DNA replication and normal SOS inducibility. RecF binds preferentially to single-stranded, linear DNA. It also seems to bind ATP. The sequence is that of DNA replication and repair protein RecF from Shewanella baltica (strain OS223).